Here is a 523-residue protein sequence, read N- to C-terminus: Ribonuclease Y (523 aa).

A helical transmembrane segment spans residues 18-38 (WSLTVALVIGGALGFLVVWAF). Residues 213-276 (TSTIVSLPNE…EVARGALEAL (64 aa)) form the KH domain. An HD domain is found at 339–432 (VLDHSVETAS…VILADTISAT (94 aa)).

Belongs to the RNase Y family.

The protein resides in the cell membrane. Its function is as follows. Endoribonuclease that initiates mRNA decay. The protein is Ribonuclease Y of Opitutus terrae (strain DSM 11246 / JCM 15787 / PB90-1).